The sequence spans 982 residues: Glutamate [NMDA] receptor subunit 1 (982 aa).

Residues 1–16 (MAFAVWFLSTFVIVAA) form the signal peptide. The Extracellular segment spans residues 17–561 (QRHMALEHEG…TLVSFLQPFS (545 aa)). N-linked (GlcNAc...) asparagine glycosylation is found at asparagine 247, asparagine 303, asparagine 334, asparagine 386, asparagine 443, asparagine 470, and asparagine 490. Residues 518–520 (PLT) and arginine 525 contribute to the glycine site. Residues 562-582 (NTLWILVMVSVHVVALVLYLL) form a helical membrane-spanning segment. Over 583-639 (DRFSPFGRFKLSHSDSNEEKALNLSSAVWFAWGVLLNSGIGEGTPRSFSARVLGMVW) the chain is Cytoplasmic. The helical transmembrane segment at 640–660 (AGFAMIIVASYTANLAAFLVL) threads the bilayer. Topologically, residues 661–819 (ERPKTKLSGI…KTPNTLGLKN (159 aa)) are extracellular. Asparagine 681 carries N-linked (GlcNAc...) asparagine glycosylation. Glycine-binding residues include serine 691 and aspartate 735. The chain crosses the membrane as a helical span at residues 820–840 (MAGVFILVGVGIAGGVGLIII). Residues 841–982 (EVIYKKHQVK…YTSDVSHLVV (142 aa)) lie on the Cytoplasmic side of the membrane. The disordered stretch occupies residues 934–982 (EIGKPGQSPKVIGGPPHPMLGKTRPQAQQNLLPPRYSPGYTSDVSHLVV). Residues 972–982 (GYTSDVSHLVV) are compositionally biased toward polar residues.

The protein belongs to the glutamate-gated ion channel (TC 1.A.10.1) family. In terms of assembly, forms a heteromeric NMDA channel with Nmdar2.

Its subcellular location is the cell membrane. It is found in the postsynaptic cell membrane. It localises to the postsynaptic density. Functionally, NMDA receptor subtype of glutamate-gated ion channels with high calcium permeability and voltage-dependent sensitivity to magnesium. Mediated by glycine. This protein plays a key role in synaptic plasticity, synaptogenesis, excitotoxicity, memory acquisition and learning. It mediates neuronal functions in glutamate neurotransmission. Is involved in the cell surface targeting of NMDA receptors. Plays a role in associative learning and in long-term memory consolidation. This is Glutamate [NMDA] receptor subunit 1 from Drosophila willistoni (Fruit fly).